Here is a 132-residue protein sequence, read N- to C-terminus: ATP synthase epsilon chain, chloroplastic (132 aa).

Belongs to the ATPase epsilon chain family. As to quaternary structure, F-type ATPases have 2 components, CF(1) - the catalytic core - and CF(0) - the membrane proton channel. CF(1) has five subunits: alpha(3), beta(3), gamma(1), delta(1), epsilon(1). CF(0) has three main subunits: a, b and c.

The protein localises to the plastid. It is found in the chloroplast thylakoid membrane. Produces ATP from ADP in the presence of a proton gradient across the membrane. This chain is ATP synthase epsilon chain, chloroplastic, found in Coffea arabica (Arabian coffee).